We begin with the raw amino-acid sequence, 307 residues long: Ribonuclease Z (307 aa).

Zn(2+) contacts are provided by His63, His65, Asp67, His68, His141, Asp212, and His270. Asp67 acts as the Proton acceptor in catalysis.

It belongs to the RNase Z family. As to quaternary structure, homodimer. Zn(2+) serves as cofactor.

It carries out the reaction Endonucleolytic cleavage of RNA, removing extra 3' nucleotides from tRNA precursor, generating 3' termini of tRNAs. A 3'-hydroxy group is left at the tRNA terminus and a 5'-phosphoryl group is left at the trailer molecule.. Zinc phosphodiesterase, which displays some tRNA 3'-processing endonuclease activity. Probably involved in tRNA maturation, by removing a 3'-trailer from precursor tRNA. The polypeptide is Ribonuclease Z (Bacillus cereus (strain ATCC 14579 / DSM 31 / CCUG 7414 / JCM 2152 / NBRC 15305 / NCIMB 9373 / NCTC 2599 / NRRL B-3711)).